The chain runs to 246 residues: tRNA (guanine-N(7)-)-methyltransferase (246 aa).

The S-adenosyl-L-methionine site is built by E77, E102, D129, and D152. Residue D152 is part of the active site. Substrate is bound by residues K156, D188, and T225 to E228.

This sequence belongs to the class I-like SAM-binding methyltransferase superfamily. TrmB family.

The catalysed reaction is guanosine(46) in tRNA + S-adenosyl-L-methionine = N(7)-methylguanosine(46) in tRNA + S-adenosyl-L-homocysteine. The protein operates within tRNA modification; N(7)-methylguanine-tRNA biosynthesis. Functionally, catalyzes the formation of N(7)-methylguanine at position 46 (m7G46) in tRNA. In Haemophilus influenzae (strain 86-028NP), this protein is tRNA (guanine-N(7)-)-methyltransferase.